A 415-amino-acid polypeptide reads, in one-letter code: Cysteate synthase (415 aa).

K104 is subject to N6-(pyridoxal phosphate)lysine. Pyridoxal 5'-phosphate contacts are provided by N131 and T376.

It belongs to the threonine synthase family. Cysteate synthase subfamily. As to quaternary structure, homotrimer. It depends on pyridoxal 5'-phosphate as a cofactor.

The enzyme catalyses O-phospho-L-serine + sulfite + H(+) = L-cysteate + phosphate. It functions in the pathway cofactor biosynthesis; coenzyme M biosynthesis. Its function is as follows. Specifically catalyzes the beta-elimination of phosphate from L-phosphoserine and the beta-addition of sulfite to the dehydroalanine intermediate to produce L-cysteate. The polypeptide is Cysteate synthase (Methanothrix thermoacetophila (strain DSM 6194 / JCM 14653 / NBRC 101360 / PT) (Methanosaeta thermophila)).